Here is a 592-residue protein sequence, read N- to C-terminus: MAVPPLLRGALLLWQLLATGGAALEIGRFDPERGRGPAPCQAMEIPMCRGIGYNLTRMPNLLGHTSQGEAAAQLAEFSPLVQYGCHSHLRFFLCSLYAPMCTDQVSTPIPACRPMCEQARLRCAPIMEQFNFGWPDSLDCARLPTRNDPHALCMEAPENATAGPTEPHKGLGMLPVAPRPARPPGDSAPGPGSGGTCDNPEKFQYVEKSRSCAPRCGPGVEVFWSRRDKDFALVWMAVWSALCFFSTAFTVFTFLLEPHRFQYPERPIIFLSMCYNVYSLAFLIRAVAGAQSVACDQEAGALYVIQEGLENTGCTLVFLLLYYFGMASSLWWVVLTLTWFLAAGKKWGHEAIEAHGSYFHMAAWGLPALKTIVVLTLRKVAGDELTGLCYVASMDPAALTGFVLVPLSCYLVLGTSFLLTGFVALFHIRKIMKTGGTNTEKLEKLMVKIGVFSILYTVPATCVIVCYVYERLNMDFWRLRATEQPCTAATVPGGRRDCSLPGGSVPTVAVFMLKIFMSLVVGITSGVWVWSSKTFQTWQSLCYRKMAAGRARAKACRTPGGYGRGTHCHYKAPTVVLHMTKTDPSLENPTHL.

A signal peptide spans 1–23 (MAVPPLLRGALLLWQLLATGGAA). Residues 24–230 (LEIGRFDPER…EVFWSRRDKD (207 aa)) are Extracellular-facing. In terms of domain architecture, FZ spans 35 to 156 (RGPAPCQAME…NDPHALCMEA (122 aa)). 5 disulfides stabilise this stretch: cysteine 40/cysteine 101, cysteine 48/cysteine 94, cysteine 85/cysteine 123, cysteine 112/cysteine 153, and cysteine 116/cysteine 140. Residue asparagine 54 is glycosylated (N-linked (GlcNAc...) asparagine). Residues 59–173 (PNLLGHTSQG…PTEPHKGLGM (115 aa)) form a required for Wnt-activated receptor activity region. Residue asparagine 159 is glycosylated (N-linked (GlcNAc...) asparagine). A helical membrane pass occupies residues 231–251 (FALVWMAVWSALCFFSTAFTV). The Cytoplasmic segment spans residues 252-267 (FTFLLEPHRFQYPERP). Residues 268–288 (IIFLSMCYNVYSLAFLIRAVA) form a helical membrane-spanning segment. At 289–316 (GAQSVACDQEAGALYVIQEGLENTGCTL) the chain is on the extracellular side. A helical transmembrane segment spans residues 317-337 (VFLLLYYFGMASSLWWVVLTL). Topologically, residues 338–356 (TWFLAAGKKWGHEAIEAHG) are cytoplasmic. The helical transmembrane segment at 357-377 (SYFHMAAWGLPALKTIVVLTL) threads the bilayer. Topologically, residues 378–401 (RKVAGDELTGLCYVASMDPAALTG) are extracellular. Residues 402-422 (FVLVPLSCYLVLGTSFLLTGF) traverse the membrane as a helical segment. The Cytoplasmic segment spans residues 423–448 (VALFHIRKIMKTGGTNTEKLEKLMVK). The chain crosses the membrane as a helical span at residues 449-469 (IGVFSILYTVPATCVIVCYVY). Residues 470 to 509 (ERLNMDFWRLRATEQPCTAATVPGGRRDCSLPGGSVPTVA) lie on the Extracellular side of the membrane. The helical transmembrane segment at 510–530 (VFMLKIFMSLVVGITSGVWVW) threads the bilayer. The Cytoplasmic portion of the chain corresponds to 531 to 592 (SSKTFQTWQS…DPSLENPTHL (62 aa)). Positions 533–538 (KTFQTW) match the Lys-Thr-X-X-X-Trp motif, mediates interaction with the PDZ domain of Dvl family members motif. Residues 555 to 592 (ACRTPGGYGRGTHCHYKAPTVVLHMTKTDPSLENPTHL) are required for CTNNB1 accumulation and TCF transcription factor activity.

Belongs to the G-protein coupled receptor Fz/Smo family. Post-translationally, ubiquitinated by ZNRF3, leading to its degradation by the proteasome. In the embryo, found in the neural tube, trunk skeletal muscle precursors (myotomes), limb skeletal anlagen, craniofacial regions and nephric ducts. In the adult, expression is abundant in heart, brain, testis and skeletal muscle. In the testis, expressed in all spermatogenic cell types. Lower levels in adult lung, liver and kidney. Barely detectable in spleen. Expressed also in chondrocytes.

Its subcellular location is the cell membrane. In terms of biological role, receptor for WNT2 that is coupled to the beta-catenin canonical signaling pathway, which leads to the activation of disheveled proteins, inhibition of GSK-3 kinase, nuclear accumulation of beta-catenin and activation of Wnt target genes. Plays a role in neuromuscular junction (NMJ) assembly by negatively regulating the clustering of acetylcholine receptors (AChR) through the beta-catenin canonical signaling pathway. May play a role in neural progenitor cells (NPCs) viability through the beta-catenin canonical signaling pathway by negatively regulating cell cycle arrest leading to inhibition of neuron apoptotic process. During hippocampal development, regulates neuroblast proliferation and apoptotic cell death. Controls bone formation through non canonical Wnt signaling mediated via ISG15. Positively regulates bone regeneration through non canonical Wnt signaling. This Mus musculus (Mouse) protein is Frizzled-9 (Fzd9).